A 109-amino-acid chain; its full sequence is uncharacterized protein (109 aa).

A signal peptide spans 1–21 (MEKSICTSVLVLGLFISSAIG).

Prismatic layer of shell (at protein level). Expressed primarily in the mantle with highest level in the mantle edge and lower level in the mantle pallium.

It is found in the secreted. This is an uncharacterized protein from Margaritifera margaritifera (Freshwater pearl mussel).